A 388-amino-acid polypeptide reads, in one-letter code: MKSLSLLALAAIAPPAAVAAVVDHQVPFENRPVQGLPEKFLIQLGPEQTRWVTEDEKWALKMEGVNFFDITAEPDRGFSVKSHERIQVSFPSEVKHQTELAPLLEQLSKDNMRQNLVHFTSFHTRYYKSETGVQSATWLFEQVEEAIQDSGAAQHAVKVERFEHSWGQFSIIATIPGRTNKTVVIGAHQDSINLFLPSILPAPGADDDGSGTVTILEAFRVLLQSEAVQQGNAANTIEFHWYSAEEAGLLGSQAIFSDYSKTGRDIKAMLQQDMTGYVEGTTKAGEVESVGVITDFVDPGLTEFIKRVITGYCTIPFVLTQCGYACSDHASASRYGYPSAFVIESEFKRSNQRIHTTGDTVDLLSFDHMLQHARMTLAFAYELAFAEL.

The N-terminal stretch at Met-1–Ala-19 is a signal peptide. The propeptide occupies Ala-20–Val-88. Residue Asn-180 is glycosylated (N-linked (GlcNAc...) asparagine). Residues His-188, Asp-207, Glu-246, and Asp-273 each coordinate Zn(2+). A disulfide bridge links Cys-322 with Cys-326. Residue His-355 coordinates Zn(2+).

This sequence belongs to the peptidase M28 family. M28E subfamily. In terms of assembly, monomer. It depends on Zn(2+) as a cofactor.

It is found in the secreted. Extracellular aminopeptidase that allows assimilation of proteinaceous substrates. This is Leucine aminopeptidase 1 (LAP1) from Coccidioides posadasii (strain RMSCC 757 / Silveira) (Valley fever fungus).